Reading from the N-terminus, the 156-residue chain is Ribosomal RNA large subunit methyltransferase H (156 aa).

S-adenosyl-L-methionine contacts are provided by residues L73, G104, and 123 to 128; that span reads LSALTL.

Belongs to the RNA methyltransferase RlmH family. Homodimer.

The protein localises to the cytoplasm. The catalysed reaction is pseudouridine(1915) in 23S rRNA + S-adenosyl-L-methionine = N(3)-methylpseudouridine(1915) in 23S rRNA + S-adenosyl-L-homocysteine + H(+). Specifically methylates the pseudouridine at position 1915 (m3Psi1915) in 23S rRNA. The chain is Ribosomal RNA large subunit methyltransferase H from Psychromonas ingrahamii (strain DSM 17664 / CCUG 51855 / 37).